We begin with the raw amino-acid sequence, 60 residues long: Large ribosomal subunit protein bL32 (60 aa).

Belongs to the bacterial ribosomal protein bL32 family.

This Hydrogenobaculum sp. (strain Y04AAS1) protein is Large ribosomal subunit protein bL32.